The chain runs to 691 residues: 1,4-alpha-glucan-branching enzyme (691 aa).

Trp80 and Lys116 together coordinate (1,4-alpha-D-glucosyl)n. The active-site Nucleophile is Asp333. The active-site Proton donor is Glu398.

Belongs to the glycosyl hydrolase 13 family. GlgB subfamily.

It localises to the cytoplasm. It carries out the reaction Transfers a segment of a (1-&gt;4)-alpha-D-glucan chain to a primary hydroxy group in a similar glucan chain.. The protein operates within glycan biosynthesis; glycogen biosynthesis. Glycogen-branching enzyme participates in the glycogen biosynthetic process along with glycogenin and glycogen synthase. Generates alpha-1,6-glucosidic branches from alpha-1,4-linked glucose chains, to increase solubility of the glycogen polymer. This Yarrowia lipolytica (strain CLIB 122 / E 150) (Yeast) protein is 1,4-alpha-glucan-branching enzyme (GLC3).